The primary structure comprises 507 residues: Protein DETOXIFICATION 39 (507 aa).

A run of 12 helical transmembrane segments spans residues 58-78 (VLFR…GMGI), 92-112 (LAAA…MLGM), 141-161 (IVLA…YPIL), 178-198 (IAGL…QKFL), 209-229 (FISA…VYVM), 233-253 (FMGI…SQCF), 287-307 (AVMI…AGLL), 318-338 (SICM…NAAV), 359-379 (WTAT…VIWF), 403-423 (FLAI…VAVG), 433-453 (VNVG…GFTF), and 459-479 (GIWT…LYVT).

This sequence belongs to the multi antimicrobial extrusion (MATE) (TC 2.A.66.1) family.

Its subcellular location is the membrane. This Arabidopsis thaliana (Mouse-ear cress) protein is Protein DETOXIFICATION 39.